The sequence spans 304 residues: E3 ubiquitin-protein ligase RNF144B (304 aa).

Positions 27-245 (PLVTCKLCLC…YDRGPCRNKL (219 aa)) are TRIAD supradomain. Zn(2+) is bound by residues Cys31, Cys34, Cys54, Cys57, Cys122, Cys127, Cys146, Cys149, Cys154, Cys157, His162, Cys167, Cys194, and Cys197. Residues 31–81 (CKLCLCEQSLDKMTTLQECRCIFCTACLKQYMQLAIREGCGSPITCPDMVC) form an RING-type 1 zinc finger. The segment at 102–167 (QLYQRLKFER…KDAWHAEVSC (66 aa)) adopts an IBR-type zinc-finger fold. The segment at 194–223 (CPVCRVYIERNEGCAQMMCKNCKHTFCWYC) adopts an RING-type 2; atypical zinc-finger fold. Cys207 is an active-site residue. Zn(2+)-binding residues include Cys212, Cys215, Cys220, Cys223, His235, and Cys241. A helical transmembrane segment spans residues 259–279 (VVGILVGLGIIALVTSPLLLL).

The protein belongs to the RBR family. RNF144 subfamily. As to quaternary structure, interacts with UBE2L3, UBE2L6 and LCMT2, as well as with BAX. Interacts with TBK1; this interaction inhibits TBK1 phosphorylation and 'Lys-63'-linked polyubiquitination. Auto-ubiquitinated.

The protein resides in the mitochondrion membrane. It is found in the cytoplasm. The catalysed reaction is [E2 ubiquitin-conjugating enzyme]-S-ubiquitinyl-L-cysteine + [acceptor protein]-L-lysine = [E2 ubiquitin-conjugating enzyme]-L-cysteine + [acceptor protein]-N(6)-ubiquitinyl-L-lysine.. It functions in the pathway protein modification; protein ubiquitination. Its function is as follows. E3 ubiquitin-protein ligase which accepts ubiquitin from E2 ubiquitin-conjugating enzymes UBE2L3 and UBE2L6 in the form of a thioester and then directly transfers the ubiquitin to targeted substrates such as LCMT2, thereby promoting their degradation. Induces apoptosis via a p53/TP53-dependent but caspase-independent mechanism. Plays a crucial role in maintaining the genomic stability by controlling the degradation of multiple proteins involved in mitotic progression and DNA damage. Regulates epithelial homeostasis by mediating degradation of CDKN1A and isoform 2 of TP63. Plays a regulatory role in innate immunity by negatively regulating IRF3 activation and IFN-beta production. Mechanistically, inhibits TBK1 phosphorylation and 'Lys-63'-linked polyubiquitination independently of its E3 ligase activity. Alternatively, promotes 'Lys-27' and 'Lys-33'-linked ubiquitination of IFIH1/MDA5, promoting selective autophagic degradation of IFIH1/MDA5 to inhibit antiviral response. The chain is E3 ubiquitin-protein ligase RNF144B (RNF144B) from Bos taurus (Bovine).